A 368-amino-acid polypeptide reads, in one-letter code: MTIAAAPPSSRFRAVRIWLTLVAALIAVMVLVGGATRLTESGLSIVEWKPVTGSLPPLTDTQWHAAFDGYKQIPQYRELNAGMTLDQFKTIFWWEWSHRLLGRVIGIVYLLPFLWFLWRGAIGPEWKRALWIIFALGALQGAVGWWMVASGLSQRTEVSQVRLATHLSLALIIYAAIVWTLRRMADGARVAAPVRLRVTALALLGLTFVQLYAGALVAGLRAGRLYNTWPEIDGALIPDAARLWFESPWWKNLFDNHLTVQFDHRMLAYALWTLAALHMIDALRTRAAARGAVQLFLALTAQATLGIFTVLYAAPIDLALVHQAMALVVLTLAVLQAERLTATRKDRTARDRGAAGRLAIPSEPFPSA.

5 consecutive transmembrane segments (helical) span residues 14–34, 104–124, 129–149, 161–181, and 200–220; these read AVRI…LVGG, VIGI…AIGP, ALWI…WMVA, VRLA…VWTL, and ALAL…VAGL. Residue His-264 coordinates heme. 3 consecutive transmembrane segments (helical) span residues 266-283, 296-316, and 318-338; these read MLAY…IDAL, FLAL…AAPI, and LALV…LQAE. His-322 contributes to the heme binding site.

The protein belongs to the COX15/CtaA family. Type 2 subfamily. Interacts with CtaB. Heme b serves as cofactor.

Its subcellular location is the cell membrane. The catalysed reaction is Fe(II)-heme o + 2 A + H2O = Fe(II)-heme a + 2 AH2. It functions in the pathway porphyrin-containing compound metabolism; heme A biosynthesis; heme A from heme O: step 1/1. Functionally, catalyzes the conversion of heme O to heme A by two successive hydroxylations of the methyl group at C8. The first hydroxylation forms heme I, the second hydroxylation results in an unstable dihydroxymethyl group, which spontaneously dehydrates, resulting in the formyl group of heme A. This is Heme A synthase from Rhodopseudomonas palustris (strain ATCC BAA-98 / CGA009).